A 413-amino-acid chain; its full sequence is Tryptophan synthase beta chain (413 aa).

Lysine 107 bears the N6-(pyridoxal phosphate)lysine mark.

This sequence belongs to the TrpB family. As to quaternary structure, tetramer of two alpha and two beta chains. Pyridoxal 5'-phosphate serves as cofactor.

The catalysed reaction is (1S,2R)-1-C-(indol-3-yl)glycerol 3-phosphate + L-serine = D-glyceraldehyde 3-phosphate + L-tryptophan + H2O. It participates in amino-acid biosynthesis; L-tryptophan biosynthesis; L-tryptophan from chorismate: step 5/5. In terms of biological role, the beta subunit is responsible for the synthesis of L-tryptophan from indole and L-serine. The chain is Tryptophan synthase beta chain from Trichormus variabilis (strain ATCC 29413 / PCC 7937) (Anabaena variabilis).